The following is a 24-amino-acid chain: VVNGKPTRTNVGRMVSLKYRNKHI.

Heterodimer of a heavy and a light chain linked by disulfide bond(s).

HPTA is an acidic heparin-binding growth factor for hepatocytes. In Oryctolagus cuniculus (Rabbit), this protein is Heptapoietin A light chain.